The following is a 496-amino-acid chain: Glycerol kinase (496 aa).

T12 lines the ADP pocket. Residues T12, T13, and S14 each coordinate ATP. T12 contributes to the sn-glycerol 3-phosphate binding site. R16 is an ADP binding site. Residues R82, E83, and Y134 each coordinate sn-glycerol 3-phosphate. R82, E83, and Y134 together coordinate glycerol. Position 230 is a phosphohistidine; by HPr (H230). Residue D244 participates in sn-glycerol 3-phosphate binding. Glycerol is bound by residues D244 and Q245. 2 residues coordinate ADP: T266 and G309. The ATP site is built by T266, G309, Q313, and G410. 2 residues coordinate ADP: G410 and N414.

It belongs to the FGGY kinase family. As to quaternary structure, homotetramer and homodimer (in equilibrium). In terms of processing, the phosphoenolpyruvate-dependent sugar phosphotransferase system (PTS), including enzyme I, and histidine-containing protein (HPr) are required for the phosphorylation, which leads to the activation of the enzyme.

The catalysed reaction is glycerol + ATP = sn-glycerol 3-phosphate + ADP + H(+). Its pathway is polyol metabolism; glycerol degradation via glycerol kinase pathway; sn-glycerol 3-phosphate from glycerol: step 1/1. With respect to regulation, activated by phosphorylation and inhibited by fructose 1,6-bisphosphate (FBP). Its function is as follows. Key enzyme in the regulation of glycerol uptake and metabolism. Catalyzes the phosphorylation of glycerol to yield sn-glycerol 3-phosphate. This Bacillus velezensis (strain DSM 23117 / BGSC 10A6 / LMG 26770 / FZB42) (Bacillus amyloliquefaciens subsp. plantarum) protein is Glycerol kinase.